The following is a 228-amino-acid chain: Orotate phosphoribosyltransferase (228 aa).

Residues Arg-107, Lys-108, Lys-111, and 133–141 (EDLTTDGGS) each bind 5-phospho-alpha-D-ribose 1-diphosphate. Thr-137 is an orotate binding site.

This sequence belongs to the purine/pyrimidine phosphoribosyltransferase family. PyrE subfamily. Homodimer. It depends on Mg(2+) as a cofactor.

It catalyses the reaction orotidine 5'-phosphate + diphosphate = orotate + 5-phospho-alpha-D-ribose 1-diphosphate. Its pathway is pyrimidine metabolism; UMP biosynthesis via de novo pathway; UMP from orotate: step 1/2. In terms of biological role, catalyzes the transfer of a ribosyl phosphate group from 5-phosphoribose 1-diphosphate to orotate, leading to the formation of orotidine monophosphate (OMP). The polypeptide is Orotate phosphoribosyltransferase (Jannaschia sp. (strain CCS1)).